Reading from the N-terminus, the 582-residue chain is Protein LYRIC (582 aa).

At 1–48 the chain is on the lumenal side; the sequence is MAARSWQDELAQQAEEGSARLREMLSVGLGFLRTELGLDLGLEPKRYP. The tract at residues 1 to 71 is activation of NF-kappa-B; sequence MAARSWQDEL…LLLFLLGYGW (71 aa). Residues 49–69 form a helical membrane-spanning segment; the sequence is GWVILVGTGALGLLLLFLLGY. Over 70-582 the chain is Cytoplasmic; that stretch reads GWAAACAGAR…KKKKKARRET (513 aa). Positions 72–169 are interaction with BCCIP; the sequence is AAACAGARKK…EKSKKNKKKS (98 aa). Residues 78 to 222 form a disordered region; it reads ARKKRRSPPR…DSGSLDSTIP (145 aa). The span at 93–106 shows a compositional bias: low complexity; that stretch reads AAVPAAAPDDLALL. The tract at residues 101–205 is interaction with RELA; that stretch reads DDLALLKNLR…ISHREKRQQR (105 aa). Basic and acidic residues predominate over residues 109–127; sequence LRSEEQKKKNRKKLSEKPK. Thr143 carries the phosphothreonine modification. Residues 160 to 169 show a composition bias toward basic residues; sequence EKSKKNKKKS. Ser180 is modified (phosphoserine). Over residues 198–208 the composition is skewed to basic residues; that stretch reads HREKRQQRKRD. A phosphoserine mark is found at Ser216 and Ser251. Position 264 is an N6-acetyllysine (Lys264). The interval 280 to 582 is disordered; sequence TVNGGGWNEK…KKKKKARRET (303 aa). A phosphoserine mark is found at Ser298, Ser306, Ser308, Ser311, Ser323, Ser339, Ser344, and Ser369. Over residues 320–333 the composition is skewed to polar residues; the sequence is SAWSQDTGDANTNG. 2 stretches are compositionally biased toward polar residues: residues 354 to 372 and 383 to 394; these read EPVS…SRNQ and NGLSSADPNSDW. Residues 381-443 form a lung-homing for mammary tumors region; it reads GLNGLSSADP…EGALPTGKSK (63 aa). 2 positions are modified to phosphoserine: Ser415 and Ser426. The span at 421–434 shows a compositional bias: basic and acidic residues; sequence DDQKVSDDDKEKGE. Basic residues predominate over residues 441–451; it reads KSKKKKKKKKK. Ser457 is subject to Phosphoserine. Thr458 is modified (phosphothreonine). Ser478, Ser494, and Ser496 each carry phosphoserine. Composition is skewed to polar residues over residues 504 to 520 and 549 to 568; these read KNSQ…STEP and NTKQ…SWES. Position 568 is a phosphoserine (Ser568). Positions 571–582 are enriched in basic residues; that stretch reads QIKKKKKARRET.

In terms of assembly, interacts with BCCIP, CREBBP/CBP and RELA/p65. As to expression, widely expressed with highest levels in muscle-dominating organs such as skeletal muscle, heart, tongue and small intestine and in endocrine glands such as thyroid and adrenal gland. Overexpressed in various cancers including breast, brain, prostate, melanoma and glioblastoma multiforme.

The protein localises to the endoplasmic reticulum membrane. It is found in the nucleus membrane. Its subcellular location is the cell junction. The protein resides in the tight junction. It localises to the nucleus. The protein localises to the nucleolus. It is found in the cytoplasm. Its subcellular location is the perinuclear region. In terms of biological role, down-regulates SLC1A2/EAAT2 promoter activity when expressed ectopically. Activates the nuclear factor kappa-B (NF-kappa-B) transcription factor. Promotes anchorage-independent growth of immortalized melanocytes and astrocytes which is a key component in tumor cell expansion. Promotes lung metastasis and also has an effect on bone and brain metastasis, possibly by enhancing the seeding of tumor cells to the target organ endothelium. Induces chemoresistance. The polypeptide is Protein LYRIC (MTDH) (Homo sapiens (Human)).